A 669-amino-acid chain; its full sequence is UvrABC system protein C (669 aa).

One can recognise a GIY-YIG domain in the interval 16-95 (TNPGVYRFRD…IKEFKPRFNV (80 aa)). The 36-residue stretch at 207 to 242 (KRFIGRLEKDMAAAVAELDYERAARVRDDIIALRKV) folds into the UVR domain.

Belongs to the UvrC family. As to quaternary structure, interacts with UvrB in an incision complex.

It is found in the cytoplasm. The UvrABC repair system catalyzes the recognition and processing of DNA lesions. UvrC both incises the 5' and 3' sides of the lesion. The N-terminal half is responsible for the 3' incision and the C-terminal half is responsible for the 5' incision. The sequence is that of UvrABC system protein C from Arthrobacter sp. (strain FB24).